Here is a 396-residue protein sequence, read N- to C-terminus: Activity-regulated cytoskeleton-associated protein (396 aa).

Positions 54-78 (SKQVERELKGLHRSVGKLENNLDGY) form a coiled coil. Residues 89 to 100 (KSIKACLCRCQE) form an interaction with SH3GL1 or SH3GL3 region. A disordered region spans residues 177-207 (PPAAGELPEQESVEAQQYQSWGPGEDGQPSP). The interaction with DNM2 stretch occupies residues 195–214 (QSWGPGEDGQPSPGVDTQIF). Phosphoserine; by CaMK2 is present on Ser260. Glycyl lysine isopeptide (Lys-Gly) (interchain with G-Cter in ubiquitin) cross-links involve residues Lys268 and Lys269. The residue at position 278 (Thr278) is a Phosphothreonine. The interval 356–396 (QDGLEQAAEPSGTPLPTEDETEALTPALTSESVASDRTQPE) is disordered. Residues 382-396 (ALTSESVASDRTQPE) show a composition bias toward polar residues.

The protein belongs to the ARC/ARG3.1 family. Homooligomer; homooligomerizes into virion-like capsids. Interacts with SH3GL1/endophilin-2, SH3GL3/endophilin-3 and DNM2/DYN2. Interacts with CAMK2B (in the kinase inactive state); leading to target ARC to inactive synapses. Interacts with PSEN1. Interacts with GRIN2A and GRIN2B; inhibiting homooligomerization. Ubiquitinated by UBE3A, leading to its degradation by the proteasome, thereby promoting AMPA receptors (AMPARs) expression at synapses. Ubiquitinated by RNF216 at Lys-268 and Lys-269 limiting ARC protein levels induced by synaptic activity and thus regulating ARC-dependent forms of synaptic plasticity. In terms of processing, palmitoylation anchors the protein into the membrane by allowing direct insertion into the hydrophobic core of the lipid bilayer. Post-translationally, phosphorylation at Ser-260 by CaMK2 prevents homooligomerization into virion-like capsids by disrupting an interaction surface essential for high-order oligomerization. Phosphorylation by CaMK2 inhibits synaptic activity. Expressed in brain and testis. In primary visual cortex, detected in all cortical layers with the exception of layer 5: present at highest level in layers 2/3 and 4, the predominant sites of ocular dominance plasticity (at protein level). Also expressed in skin-migratory dendritic cells.

It localises to the extracellular vesicle membrane. The protein localises to the postsynaptic cell membrane. Its subcellular location is the synapse. It is found in the postsynaptic density. The protein resides in the early endosome membrane. It localises to the cell projection. The protein localises to the dendrite. Its subcellular location is the cytoplasm. It is found in the cytoskeleton. The protein resides in the cell cortex. It localises to the dendritic spine. The protein localises to the cytoplasmic vesicle. Its subcellular location is the secretory vesicle. It is found in the acrosome. The protein resides in the clathrin-coated vesicle membrane. Master regulator of synaptic plasticity that self-assembles into virion-like capsids that encapsulate RNAs and mediate intercellular RNA transfer in the nervous system. ARC protein is released from neurons in extracellular vesicles that mediate the transfer of ARC mRNA into new target cells, where ARC mRNA can undergo activity-dependent translation. ARC capsids are endocytosed and are able to transfer ARC mRNA into the cytoplasm of neurons. Acts as a key regulator of synaptic plasticity: required for protein synthesis-dependent forms of long-term potentiation (LTP) and depression (LTD) and for the formation of long-term memory. Regulates synaptic plasticity by promoting endocytosis of AMPA receptors (AMPARs) in response to synaptic activity: this endocytic pathway maintains levels of surface AMPARs in response to chronic changes in neuronal activity through synaptic scaling, thereby contributing to neuronal homeostasis. Acts as a postsynaptic mediator of activity-dependent synapse elimination in the developing cerebellum by mediating elimination of surplus climbing fiber synapses. Accumulates at weaker synapses, probably to prevent their undesired enhancement. This suggests that ARC-containing virion-like capsids may be required to eliminate synaptic material. Required to transduce experience into long-lasting changes in visual cortex plasticity and for long-term memory. Involved in postsynaptic trafficking and processing of amyloid-beta A4 (APP) via interaction with PSEN1. In addition to its role in synapses, also involved in the regulation of the immune system: specifically expressed in skin-migratory dendritic cells and regulates fast dendritic cell migration, thereby regulating T-cell activation. The chain is Activity-regulated cytoskeleton-associated protein from Mus musculus (Mouse).